Reading from the N-terminus, the 190-residue chain is Translation initiation factor IF-3 (190 aa).

This sequence belongs to the IF-3 family. As to quaternary structure, monomer.

It is found in the cytoplasm. Its function is as follows. IF-3 binds to the 30S ribosomal subunit and shifts the equilibrium between 70S ribosomes and their 50S and 30S subunits in favor of the free subunits, thus enhancing the availability of 30S subunits on which protein synthesis initiation begins. This chain is Translation initiation factor IF-3, found in Prochlorococcus marinus (strain MIT 9312).